The following is a 452-amino-acid chain: Glutamyl-tRNA(Gln) amidotransferase subunit A (452 aa).

Residues Lys56 and Ser131 each act as charge relay system in the active site. Ser155 acts as the Acyl-ester intermediate in catalysis.

The protein belongs to the amidase family. GatA subfamily. Heterotrimer of A, B and C subunits.

The catalysed reaction is L-glutamyl-tRNA(Gln) + L-glutamine + ATP + H2O = L-glutaminyl-tRNA(Gln) + L-glutamate + ADP + phosphate + H(+). Allows the formation of correctly charged Gln-tRNA(Gln) through the transamidation of misacylated Glu-tRNA(Gln) in organisms which lack glutaminyl-tRNA synthetase. The reaction takes place in the presence of glutamine and ATP through an activated gamma-phospho-Glu-tRNA(Gln). The chain is Glutamyl-tRNA(Gln) amidotransferase subunit A from Campylobacter hominis (strain ATCC BAA-381 / DSM 21671 / CCUG 45161 / LMG 19568 / NCTC 13146 / CH001A).